A 691-amino-acid chain; its full sequence is 1-butanol dehydrogenase (cytochrome c) (691 aa).

Residues 1–38 form the signal peptide; it reads MLTTTFARKREESVPLRKGIQRALLGLSCLVLSTTSFA. Pyrroloquinoline quinone is bound at residue Glu84. A disulfide bridge links Cys130 with Cys131. Pyrroloquinoline quinone contacts are provided by residues Arg136, Thr181, and 197 to 198; that span reads GA. Ca(2+) is bound by residues Glu199 and Asp322. Asp322 serves as the catalytic Proton acceptor. Pyrroloquinoline quinone-binding positions include Lys349, 408–409, and Val558; that span reads NW. One can recognise a Cytochrome c domain in the interval 605 to 684; that stretch reads DDVAEGTGLY…KIKAFILGTA (80 aa). Heme c-binding residues include Cys618, Cys621, His622, and Met661.

This sequence belongs to the bacterial PQQ dehydrogenase family. In terms of assembly, monomer. The cofactor is pyrroloquinoline quinone. Ca(2+) is required as a cofactor. It depends on heme c as a cofactor.

Its subcellular location is the periplasm. It catalyses the reaction butan-1-ol + 2 Fe(III)-[cytochrome c] = butanal + 2 Fe(II)-[cytochrome c] + 2 H(+). Dehydrogenase activity is increased by ammonium ions. Its function is as follows. Involved in the metabolism of butane. Could be important in the detoxification of 1-butanol. Catalyzes the oxidation of 1-butanol to butyraldehyde. Also able to use 1-propanol, 2-pentanol, propionaldehyde and butyraldehyde as substrates. In Thauera butanivorans (strain ATCC 43655 / DSM 2080 / JCM 20651 / CCUG 51053 / NBRC 103042 / IAM 12574 / Bu B1211) (Pseudomonas butanovora), this protein is 1-butanol dehydrogenase (cytochrome c).